The primary structure comprises 524 residues: Cytokinin dehydrogenase 7 (524 aa).

A signal peptide spans 1–22; it reads MAARCSIAFMIMASCLSVVVSG. The N-linked (GlcNAc...) asparagine glycan is linked to Asn-42. An FAD-binding PCMH-type domain is found at 55-233; the sequence is VAAAPEAVLH…TRARIGLMPA (179 aa). Residues Gly-91 and Gly-93 each contribute to the FAD site. His-94 carries the post-translational modification Pros-8alpha-FAD histidine. Positions 95 and 99 each coordinate FAD. N-linked (GlcNAc...) asparagine glycosylation is present at Asn-121. The FAD site is built by Asp-157, Thr-162, Ser-168, Ile-172, and Ile-223. N-linked (GlcNAc...) asparagine glycosylation is found at Asn-277 and Asn-320. FAD-binding residues include Tyr-472, Ser-507, and Gln-510.

Belongs to the oxygen-dependent FAD-linked oxidoreductase family. As to quaternary structure, monomer. Requires FAD as cofactor.

It is found in the secreted. The protein localises to the extracellular space. It carries out the reaction N(6)-dimethylallyladenine + A + H2O = 3-methyl-2-butenal + adenine + AH2. Functionally, catalyzes the oxidation of cytokinins, a family of N(6)-substituted adenine derivatives that are plant hormones, where the substituent is an isopentenyl group. The protein is Cytokinin dehydrogenase 7 (CKX7) of Oryza sativa subsp. japonica (Rice).